A 179-amino-acid polypeptide reads, in one-letter code: MKQFLDFLPLVVFFAFYKIYDIYAATTALIVATAIVLIYSWVRFRKVEKMALITFVLVVVFGGLTLFFHNDEFIKWKVTVIYALFAGALLVSQWVMKKPLIQRMLGKELTLPQPVWSKLNLAWAVFFILCGLANIYIAFWLPQNIWVNFKVFGLTALTLIFTLLSGIYIYRHMPQEDKS.

5 consecutive transmembrane segments (helical) span residues 22 to 42 (IYAA…YSWV), 50 to 70 (MALI…FFHN), 76 to 96 (WKVT…QWVM), 121 to 141 (LAWA…AFWL), and 149 to 169 (FKVF…GIYI).

It belongs to the YciB family.

Its subcellular location is the cell inner membrane. Plays a role in cell envelope biogenesis, maintenance of cell envelope integrity and membrane homeostasis. The polypeptide is Inner membrane-spanning protein YciB (Shigella dysenteriae serotype 1 (strain Sd197)).